A 287-amino-acid chain; its full sequence is Polyamine aminopropyltransferase (287 aa).

A PABS domain is found at 5 to 238 (ETWHETLHDH…GIMTFAWASQ (234 aa)). Position 33 (Q33) interacts with S-methyl-5'-thioadenosine. Spermidine contacts are provided by H64 and D88. Residues E108 and 140-141 (DG) contribute to the S-methyl-5'-thioadenosine site. The active-site Proton acceptor is D158. Residue 158 to 161 (DCTD) coordinates spermidine. P165 provides a ligand contact to S-methyl-5'-thioadenosine.

This sequence belongs to the spermidine/spermine synthase family. In terms of assembly, homodimer or homotetramer.

Its subcellular location is the cytoplasm. The catalysed reaction is S-adenosyl 3-(methylsulfanyl)propylamine + putrescine = S-methyl-5'-thioadenosine + spermidine + H(+). The protein operates within amine and polyamine biosynthesis; spermidine biosynthesis; spermidine from putrescine: step 1/1. Its function is as follows. Catalyzes the irreversible transfer of a propylamine group from the amino donor S-adenosylmethioninamine (decarboxy-AdoMet) to putrescine (1,4-diaminobutane) to yield spermidine. The chain is Polyamine aminopropyltransferase from Sodalis glossinidius (strain morsitans).